The sequence spans 137 residues: NADH dehydrogenase [ubiquinone] 1 beta subcomplex subunit 7 (137 aa).

Gly-2 carries the N-myristoyl glycine lipid modification. The CHCH domain occupies 56–98; it reads RDYCAHYLIRFLKCKRDSFPNFLACKHERHDWDYCEHLDYVKR. Positions 59–69 match the Cx9C motif 1 motif; it reads CAHYLIRFLKC. 2 disulfides stabilise this stretch: Cys-59–Cys-90 and Cys-69–Cys-80. Ser-73 is modified (phosphoserine). The Cx9C motif 2 motif lies at 80–90; that stretch reads CKHERHDWDYC. The tract at residues 110-137 is disordered; it reads QRKKRREQREADMAKGLGPGEVAPEVAL.

The protein belongs to the complex I NDUFB7 subunit family. In terms of assembly, complex I is composed of 45 different subunits.

It is found in the mitochondrion inner membrane. The protein localises to the mitochondrion intermembrane space. Accessory subunit of the mitochondrial membrane respiratory chain NADH dehydrogenase (Complex I), that is believed not to be involved in catalysis. Complex I functions in the transfer of electrons from NADH to the respiratory chain. The immediate electron acceptor for the enzyme is believed to be ubiquinone. The protein is NADH dehydrogenase [ubiquinone] 1 beta subcomplex subunit 7 (NDUFB7) of Bos taurus (Bovine).